A 386-amino-acid chain; its full sequence is Succinate--CoA ligase [ADP-forming] subunit beta (386 aa).

One can recognise an ATP-grasp domain in the interval 9–244; the sequence is KEILRSFGVP…LDEEDPAEVE (236 aa). ATP contacts are provided by residues K46, 53–55, E99, A102, and E107; that span reads GRG. N199 and D213 together coordinate Mg(2+). Residues N264 and 321–323 contribute to the substrate site; that span reads GIM.

This sequence belongs to the succinate/malate CoA ligase beta subunit family. Heterotetramer of two alpha and two beta subunits. Mg(2+) serves as cofactor.

It catalyses the reaction succinate + ATP + CoA = succinyl-CoA + ADP + phosphate. The enzyme catalyses GTP + succinate + CoA = succinyl-CoA + GDP + phosphate. Its pathway is carbohydrate metabolism; tricarboxylic acid cycle; succinate from succinyl-CoA (ligase route): step 1/1. Functionally, succinyl-CoA synthetase functions in the citric acid cycle (TCA), coupling the hydrolysis of succinyl-CoA to the synthesis of either ATP or GTP and thus represents the only step of substrate-level phosphorylation in the TCA. The beta subunit provides nucleotide specificity of the enzyme and binds the substrate succinate, while the binding sites for coenzyme A and phosphate are found in the alpha subunit. The sequence is that of Succinate--CoA ligase [ADP-forming] subunit beta from Acidovorax ebreus (strain TPSY) (Diaphorobacter sp. (strain TPSY)).